A 294-amino-acid chain; its full sequence is MEIRRRPPNPKVQVAHLEYAIPHQDGEPRNILEKIVWEKDREIETARQRMPLVQLKARVAELPPALDFLGALRQAPVAPAVIAEVKKASPSKGVIREDFDPVAIAKAYAAGGASCLSVLTDRTFFQGGFDVLVAVREAVDLPLLCKDFILSPHQLYQARAAGADAALLIAAILTDQDLAYLQKVAATLGLTVLVEVHDAAEMERILTLGGFPLIGINNRDLTSFETDLATTEALTQQFADRLRAQDAFLVSESGLFARADLNRVQRSGAGAVLVGEALMRQDNVEQGLRDLIAP.

The protein belongs to the TrpC family.

The catalysed reaction is 1-(2-carboxyphenylamino)-1-deoxy-D-ribulose 5-phosphate + H(+) = (1S,2R)-1-C-(indol-3-yl)glycerol 3-phosphate + CO2 + H2O. It functions in the pathway amino-acid biosynthesis; L-tryptophan biosynthesis; L-tryptophan from chorismate: step 4/5. The polypeptide is Indole-3-glycerol phosphate synthase (Synechococcus sp. (strain WH7803)).